Reading from the N-terminus, the 434-residue chain is Histidinol dehydrogenase (434 aa).

The NAD(+) site is built by Tyr-130, Gln-191, and Asn-214. Substrate is bound by residues Ser-237, Gln-259, and His-262. Residues Gln-259 and His-262 each contribute to the Zn(2+) site. Active-site proton acceptor residues include Glu-327 and His-328. Substrate is bound by residues His-328, Asp-361, Glu-415, and His-420. A Zn(2+)-binding site is contributed by Asp-361. His-420 lines the Zn(2+) pocket.

It belongs to the histidinol dehydrogenase family. The cofactor is Zn(2+).

The catalysed reaction is L-histidinol + 2 NAD(+) + H2O = L-histidine + 2 NADH + 3 H(+). The protein operates within amino-acid biosynthesis; L-histidine biosynthesis; L-histidine from 5-phospho-alpha-D-ribose 1-diphosphate: step 9/9. Functionally, catalyzes the sequential NAD-dependent oxidations of L-histidinol to L-histidinaldehyde and then to L-histidine. This is Histidinol dehydrogenase from Rhizobium meliloti (strain 1021) (Ensifer meliloti).